Reading from the N-terminus, the 408-residue chain is Phosphopentomutase (408 aa).

Mn(2+)-binding residues include Asp-10, Asp-303, His-308, Asp-344, His-345, and His-356.

It belongs to the phosphopentomutase family. Requires Mn(2+) as cofactor.

The protein resides in the cytoplasm. It carries out the reaction 2-deoxy-alpha-D-ribose 1-phosphate = 2-deoxy-D-ribose 5-phosphate. It catalyses the reaction alpha-D-ribose 1-phosphate = D-ribose 5-phosphate. It participates in carbohydrate degradation; 2-deoxy-D-ribose 1-phosphate degradation; D-glyceraldehyde 3-phosphate and acetaldehyde from 2-deoxy-alpha-D-ribose 1-phosphate: step 1/2. Isomerase that catalyzes the conversion of deoxy-ribose 1-phosphate (dRib-1-P) and ribose 1-phosphate (Rib-1-P) to deoxy-ribose 5-phosphate (dRib-5-P) and ribose 5-phosphate (Rib-5-P), respectively. This chain is Phosphopentomutase, found in Tolumonas auensis (strain DSM 9187 / NBRC 110442 / TA 4).